Consider the following 92-residue polypeptide: Small ribosomal subunit protein uS19c (92 aa).

The protein belongs to the universal ribosomal protein uS19 family.

It is found in the plastid. The protein resides in the chloroplast. Its function is as follows. Protein S19 forms a complex with S13 that binds strongly to the 16S ribosomal RNA. This Eucalyptus globulus subsp. globulus (Tasmanian blue gum) protein is Small ribosomal subunit protein uS19c.